We begin with the raw amino-acid sequence, 328 residues long: Bypass of stop codon protein 1 (328 aa).

The Flo11 domain maps to 1–155 (MSQQNILHYD…TYQCKGNNDG (155 aa)). Disordered regions lie at residues 168–259 (SSIT…VKSS) and 286–328 (TSTD…DPTT). The segment covering 291-328 (TTLAASTSPFSSFTSSDSSSSSDVTSSTIQTTSVDPTT) has biased composition (low complexity).

The sequence is that of Bypass of stop codon protein 1 (BSC1) from Saccharomyces cerevisiae (strain ATCC 204508 / S288c) (Baker's yeast).